The sequence spans 605 residues: Protein Spindly (605 aa).

M1 is modified (N-acetylmethionine). Residues 3-442 are a coiled coil; it reads TDIVINLRCK…ELKLKYEPEE (440 aa). 3 positions are modified to phosphoserine: S513, S515, and S555. A disordered region spans residues 545–581; the sequence is LSERSGNTLNSPRLAAESKLQTEVKEGKETASKLEKE. Residues 564–581 are compositionally biased toward basic and acidic residues; it reads LQTEVKEGKETASKLEKE.

The protein belongs to the Spindly family. As to quaternary structure, interacts with KNTC1 and ZW10. These interactions appear weak and may be transient or indirect. Interacts with dynein intermediate chain and dynactin (DCTN1). Interacts with the catalytically active form of USP45. Post-translationally, monoubiquitinated with'Lys-48' linkage. Deubiquitinated by USP45.

The protein resides in the cytoplasm. It localises to the cytoskeleton. Its subcellular location is the microtubule organizing center. It is found in the centrosome. The protein localises to the chromosome. The protein resides in the centromere. It localises to the kinetochore. Its subcellular location is the nucleus. It is found in the spindle pole. Functionally, required for the localization of dynein and dynactin to the mitotic kintochore. Dynein is believed to control the initial lateral interaction between the kinetochore and spindle microtubules and to facilitate the subsequent formation of end-on kinetochore-microtubule attachments mediated by the NDC80 complex. Also required for correct spindle orientation. Does not appear to be required for the removal of spindle assembly checkpoint (SAC) proteins from the kinetochore upon bipolar spindle attachment. Acts as an adapter protein linking the dynein motor complex to various cargos and converts dynein from a non-processive to a highly processive motor in the presence of dynactin. Facilitates the interaction between dynein and dynactin and activates dynein processivity (the ability to move along a microtubule for a long distance without falling off the track). Plays a role in cell migration. The polypeptide is Protein Spindly (Macaca fascicularis (Crab-eating macaque)).